We begin with the raw amino-acid sequence, 487 residues long: Complement C1r subcomponent-like protein (487 aa).

Residues Met-1–Ala-35 form the signal peptide. The 125-residue stretch at Arg-39–Val-163 folds into the CUB domain. A disulfide bridge links Cys-94 with Cys-112. Asn-147 and Asn-166 each carry an N-linked (GlcNAc...) asparagine glycan. The 66-residue stretch at Val-165 to Pro-230 folds into the Sushi domain. Cys-195 and Cys-228 form a disulfide bridge. Residue Asn-242 is glycosylated (N-linked (GlcNAc...) (complex) asparagine). The Peptidase S1 domain occupies Thr-245 to Asn-484. His-283 functions as the Charge relay system in the catalytic mechanism. Residue Asn-296 is glycosylated (N-linked (GlcNAc...) asparagine). The Charge relay system role is filled by Asp-339. Residue Asn-363 is glycosylated (N-linked (GlcNAc...) asparagine). 2 disulfide bridges follow: Cys-402–Cys-421 and Cys-432–Cys-462. The active-site Charge relay system is the Ser-436.

This sequence belongs to the peptidase S1 family. Highly expressed in placenta, liver, kidney, pancreas, moderately in lung, spleen, prostate, ovary, colon, and PBL, and weakly in heart, skeletal muscle, thymus, testis, and small intestine. Expressed in PC-3 (prostate adenocarcinoma) and SK-OV-3 (ovary adenocarcinoma) cells, but not in LoVo and HT-29 (colon adenocarcinoma), SMMC7721 (hepatocellular carcinoma), CaoV-3 (ovary adenocarcinoma), HeLa (cervix epithelioid carcinoma), MCF-7 (breast adenocarcinoma), U-251MG (glioma) or A-549 (lung carcinoma) cells. Widely expressed in myeloid leukemia cell lines, including K-562 (chronic myelogenous leukemia), THP-1 (myelomonocytic leukemia), HL-60 and NB4 (promyelocytic leukemia), and KG-1 (acute myelogenous leukemia) cells. Expressed mainly in the liver and in serum (at protein level).

The protein localises to the secreted. Functionally, mediates the proteolytic cleavage of HP/haptoglobin in the endoplasmic reticulum. In Homo sapiens (Human), this protein is Complement C1r subcomponent-like protein (C1RL).